The chain runs to 313 residues: Ribosomal RNA small subunit methyltransferase H (313 aa).

Residues 35-37 (GGH), D55, F79, D101, and Q108 each bind S-adenosyl-L-methionine.

It belongs to the methyltransferase superfamily. RsmH family.

Its subcellular location is the cytoplasm. It carries out the reaction cytidine(1402) in 16S rRNA + S-adenosyl-L-methionine = N(4)-methylcytidine(1402) in 16S rRNA + S-adenosyl-L-homocysteine + H(+). Its function is as follows. Specifically methylates the N4 position of cytidine in position 1402 (C1402) of 16S rRNA. The sequence is that of Ribosomal RNA small subunit methyltransferase H from Escherichia coli O139:H28 (strain E24377A / ETEC).